Here is a 107-residue protein sequence, read N- to C-terminus: Large ribosomal subunit protein uL24 (107 aa).

Belongs to the universal ribosomal protein uL24 family. Part of the 50S ribosomal subunit.

In terms of biological role, one of two assembly initiator proteins, it binds directly to the 5'-end of the 23S rRNA, where it nucleates assembly of the 50S subunit. Its function is as follows. One of the proteins that surrounds the polypeptide exit tunnel on the outside of the subunit. The protein is Large ribosomal subunit protein uL24 of Streptomyces coelicolor (strain ATCC BAA-471 / A3(2) / M145).